The chain runs to 719 residues: Putative alpha-1,3-mannosyltransferase MNT4 (719 aa).

The Cytoplasmic segment spans residues 1–4; sequence MKFH. The chain crosses the membrane as a helical span at residues 5 to 22; the sequence is LKRYVIVTSILLSFFLLF. Residues 23–719 are Lumenal-facing; the sequence is RRQFLPLTQR…KKLIEIWLQD (697 aa). N148, N273, and N449 each carry an N-linked (GlcNAc...) asparagine glycan.

This sequence belongs to the MNN1/MNT family.

The protein localises to the golgi apparatus membrane. Its pathway is protein modification; protein glycosylation. In terms of biological role, responsible for addition of the terminal mannose residues to the outer chain of core N-linked polysaccharides and to O-linked mannotriose. Implicated in late Golgi modifications. The protein is Putative alpha-1,3-mannosyltransferase MNT4 (MNT4) of Candida albicans (strain SC5314 / ATCC MYA-2876) (Yeast).